Consider the following 261-residue polypeptide: Ribosomal RNA small subunit methyltransferase A (261 aa).

S-adenosyl-L-methionine-binding residues include Asn20, Leu22, Gly47, Glu68, Asp90, and Asn110.

This sequence belongs to the class I-like SAM-binding methyltransferase superfamily. rRNA adenine N(6)-methyltransferase family. RsmA subfamily.

Its subcellular location is the cytoplasm. The enzyme catalyses adenosine(1518)/adenosine(1519) in 16S rRNA + 4 S-adenosyl-L-methionine = N(6)-dimethyladenosine(1518)/N(6)-dimethyladenosine(1519) in 16S rRNA + 4 S-adenosyl-L-homocysteine + 4 H(+). In terms of biological role, specifically dimethylates two adjacent adenosines (A1518 and A1519) in the loop of a conserved hairpin near the 3'-end of 16S rRNA in the 30S particle. May play a critical role in biogenesis of 30S subunits. This is Ribosomal RNA small subunit methyltransferase A from Prosthecochloris aestuarii (strain DSM 271 / SK 413).